A 67-amino-acid polypeptide reads, in one-letter code: uncharacterized protein (67 aa).

2 consecutive transmembrane segments (helical) span residues 8 to 28 and 41 to 61; these read MWFALGSMGLMFLAVASIYLS and ISSFAYMCMLISGIIVFVVVF.

The protein resides in the cell membrane. This is an uncharacterized protein from Bacillus subtilis (strain 168).